We begin with the raw amino-acid sequence, 425 residues long: UDP-N-acetylglucosamine 1-carboxyvinyltransferase (425 aa).

25–26 provides a ligand contact to phosphoenolpyruvate; that stretch reads KN. UDP-N-acetyl-alpha-D-glucosamine is bound at residue Arg-95. Cys-119 acts as the Proton donor in catalysis. Cys-119 is subject to 2-(S-cysteinyl)pyruvic acid O-phosphothioketal. UDP-N-acetyl-alpha-D-glucosamine is bound by residues 124–128, Asp-306, and Ile-328; that span reads RPVDQ.

The protein belongs to the EPSP synthase family. MurA subfamily.

The protein localises to the cytoplasm. It catalyses the reaction phosphoenolpyruvate + UDP-N-acetyl-alpha-D-glucosamine = UDP-N-acetyl-3-O-(1-carboxyvinyl)-alpha-D-glucosamine + phosphate. It functions in the pathway cell wall biogenesis; peptidoglycan biosynthesis. Cell wall formation. Adds enolpyruvyl to UDP-N-acetylglucosamine. The protein is UDP-N-acetylglucosamine 1-carboxyvinyltransferase of Thermus thermophilus (strain ATCC 27634 / DSM 579 / HB8).